Consider the following 83-residue polypeptide: Short neurotoxin OKI-01/OKI-19 (83 aa).

The N-terminal stretch at 1-21 is a signal peptide; it reads MKTLLLTLVVVTIVCLDLGYT. 4 disulfide bridges follow: Cys-24-Cys-45, Cys-38-Cys-62, Cys-64-Cys-75, and Cys-76-Cys-81.

The protein belongs to the three-finger toxin family. Short-chain subfamily. Type I alpha-neurotoxin sub-subfamily. In terms of tissue distribution, expressed by the venom gland.

It is found in the secreted. In terms of biological role, binds to muscle nicotinic acetylcholine receptor (nAChR) and inhibit acetylcholine from binding to the receptor, thereby impairing neuromuscular transmission. In Laticauda laticaudata (Blue-ringed sea krait), this protein is Short neurotoxin OKI-01/OKI-19.